Reading from the N-terminus, the 173-residue chain is Ribosome maturation factor RimM (173 aa).

The 74-residue stretch at 92–165 (EGEFYHADLI…RVVIEMPGEI (74 aa)) folds into the PRC barrel domain.

It belongs to the RimM family. Binds ribosomal protein uS19.

The protein localises to the cytoplasm. Its function is as follows. An accessory protein needed during the final step in the assembly of 30S ribosomal subunit, possibly for assembly of the head region. Essential for efficient processing of 16S rRNA. May be needed both before and after RbfA during the maturation of 16S rRNA. It has affinity for free ribosomal 30S subunits but not for 70S ribosomes. The polypeptide is Ribosome maturation factor RimM (Nitrobacter hamburgensis (strain DSM 10229 / NCIMB 13809 / X14)).